The chain runs to 119 residues: Large ribosomal subunit protein bL20 (119 aa).

It belongs to the bacterial ribosomal protein bL20 family.

Its function is as follows. Binds directly to 23S ribosomal RNA and is necessary for the in vitro assembly process of the 50S ribosomal subunit. It is not involved in the protein synthesizing functions of that subunit. This is Large ribosomal subunit protein bL20 from Streptococcus suis (strain 98HAH33).